An 87-amino-acid chain; its full sequence is Acyl-CoA-binding protein (87 aa).

An N-acetylserine modification is found at Ser-2. The 86-residue stretch at 2–87 (SQAEFDKAAE…VEELKKKYGI (86 aa)) folds into the ACB domain. Lys-8 is modified (N6-acetyllysine; alternate). At Lys-8 the chain carries N6-succinyllysine; alternate. Position 14 (Lys-14) interacts with an acyl-CoA. Lys-17 is modified (N6-succinyllysine). Lys-19 carries the post-translational modification N6-acetyllysine. Tyr-29 is modified (phosphotyrosine). Residues 29-33 (YSHYK), Lys-51, Lys-55, and Tyr-74 contribute to the an acyl-CoA site. Residue Lys-51 is modified to N6-acetyllysine. Lys-55 bears the N6-acetyllysine; alternate mark. The residue at position 55 (Lys-55) is an N6-succinyllysine; alternate. Residue Lys-55 is modified to N6-(2-hydroxyisobutyryl)lysine; alternate. Residue Lys-55 is modified to N6-malonyllysine; alternate. Position 77 is an N6-acetyllysine; alternate (Lys-77). Lys-77 is modified (N6-succinyllysine; alternate).

Belongs to the ACBP family. Monomer.

It is found in the endoplasmic reticulum. Its subcellular location is the golgi apparatus. Binds medium- and long-chain acyl-CoA esters with very high affinity and may function as an intracellular carrier of acyl-CoA esters. The chain is Acyl-CoA-binding protein (DBI) from Chaetophractus villosus (South American armadillo).